The chain runs to 247 residues: Phosphoribosylaminoimidazole-succinocarboxamide synthase (247 aa).

This sequence belongs to the SAICAR synthetase family.

The catalysed reaction is 5-amino-1-(5-phospho-D-ribosyl)imidazole-4-carboxylate + L-aspartate + ATP = (2S)-2-[5-amino-1-(5-phospho-beta-D-ribosyl)imidazole-4-carboxamido]succinate + ADP + phosphate + 2 H(+). It functions in the pathway purine metabolism; IMP biosynthesis via de novo pathway; 5-amino-1-(5-phospho-D-ribosyl)imidazole-4-carboxamide from 5-amino-1-(5-phospho-D-ribosyl)imidazole-4-carboxylate: step 1/2. This is Phosphoribosylaminoimidazole-succinocarboxamide synthase from Synechococcus sp. (strain JA-2-3B'a(2-13)) (Cyanobacteria bacterium Yellowstone B-Prime).